Consider the following 318-residue polypeptide: COP9 signalosome complex subunit 6 (318 aa).

Residues 32-165 (VALHPLVILN…VSVYESVIDI (134 aa)) enclose the MPN domain.

This sequence belongs to the peptidase M67A family. CSN6 subfamily. As to quaternary structure, component of the CSN complex, probably composed of cops1, cops2, cops3, cops4, cops5, cops6, cops7, cops8 and cops9.

It is found in the cytoplasm. It localises to the nucleus. In terms of biological role, component of the COP9 signalosome complex (CSN), a complex involved in various cellular and developmental processes. The CSN complex is an essential regulator of the ubiquitin (Ubl) conjugation pathway by mediating the deneddylation of the cullin subunits of E3 ligase complexes, leading to modify the Ubl ligase activity. The sequence is that of COP9 signalosome complex subunit 6 (cops6) from Xenopus laevis (African clawed frog).